Here is a 200-residue protein sequence, read N- to C-terminus: Recombination protein RecR (200 aa).

Residues cysteine 58–cysteine 73 form a C4-type zinc finger. A Toprim domain is found at aspartate 81 to proline 176.

Belongs to the RecR family.

May play a role in DNA repair. It seems to be involved in an RecBC-independent recombinational process of DNA repair. It may act with RecF and RecO. The chain is Recombination protein RecR from Pelotomaculum thermopropionicum (strain DSM 13744 / JCM 10971 / SI).